A 465-amino-acid chain; its full sequence is Ribulose bisphosphate carboxylase large chain (465 aa).

At K4 the chain carries N6,N6,N6-trimethyllysine. Substrate-binding residues include X113 and T163. Catalysis depends on K165, which acts as the Proton acceptor. A substrate-binding site is contributed by K167. K191, D193, and E194 together coordinate Mg(2+). An N6-carboxylysine modification is found at K191. H284 serves as the catalytic Proton acceptor. Positions 285, 317, and 369 each coordinate substrate.

Belongs to the RuBisCO large chain family. Type I subfamily. Heterohexadecamer of 8 large chains and 8 small chains; disulfide-linked. The disulfide link is formed within the large subunit homodimers. Mg(2+) is required as a cofactor. Post-translationally, the disulfide bond which can form in the large chain dimeric partners within the hexadecamer appears to be associated with oxidative stress and protein turnover.

It is found in the plastid. The protein resides in the chloroplast. It carries out the reaction 2 (2R)-3-phosphoglycerate + 2 H(+) = D-ribulose 1,5-bisphosphate + CO2 + H2O. It catalyses the reaction D-ribulose 1,5-bisphosphate + O2 = 2-phosphoglycolate + (2R)-3-phosphoglycerate + 2 H(+). Functionally, ruBisCO catalyzes two reactions: the carboxylation of D-ribulose 1,5-bisphosphate, the primary event in carbon dioxide fixation, as well as the oxidative fragmentation of the pentose substrate in the photorespiration process. Both reactions occur simultaneously and in competition at the same active site. The protein is Ribulose bisphosphate carboxylase large chain of Cornus obliqua (Silky dogwood).